Here is a 350-residue protein sequence, read N- to C-terminus: Ribonuclease H2 subunit B (350 aa).

Residues Gln-134–Lys-151 show a composition bias toward polar residues. Positions Gln-134–Asn-153 are disordered.

Belongs to the RNase H2 subunit B family. Highly divergent. The RNase 2 complex is a heterotrimer composed of the catalytic subunit RNH201 and of the non-catalytic subunits RNH202 and RNH203.

The protein resides in the nucleus. Its function is as follows. Non catalytic subunit of RNase H2, an endonuclease that specifically degrades the RNA of RNA:DNA hybrids. Participates in DNA replication, possibly by mediating the removal of lagging-strand Okazaki fragment RNA primers during DNA replication. Mediates the excision of single ribonucleotides from DNA:RNA duplexes. This chain is Ribonuclease H2 subunit B (RNH202), found in Saccharomyces cerevisiae (strain ATCC 204508 / S288c) (Baker's yeast).